The sequence spans 237 residues: Ribonuclease PH (237 aa).

Phosphate is bound by residues R86 and 124–126; that span reads GTR.

The protein belongs to the RNase PH family. In terms of assembly, homohexameric ring arranged as a trimer of dimers.

It catalyses the reaction tRNA(n+1) + phosphate = tRNA(n) + a ribonucleoside 5'-diphosphate. Functionally, phosphorolytic 3'-5' exoribonuclease that plays an important role in tRNA 3'-end maturation. Removes nucleotide residues following the 3'-CCA terminus of tRNAs; can also add nucleotides to the ends of RNA molecules by using nucleoside diphosphates as substrates, but this may not be physiologically important. Probably plays a role in initiation of 16S rRNA degradation (leading to ribosome degradation) during starvation. This chain is Ribonuclease PH, found in Nitrobacter winogradskyi (strain ATCC 25391 / DSM 10237 / CIP 104748 / NCIMB 11846 / Nb-255).